Consider the following 388-residue polypeptide: Basigin (388 aa).

The signal sequence occupies residues 1-21 (MAAGADVPCAVLALLVLGSLA). The Extracellular portion of the chain corresponds to 27 to 323 (TAGFIKSPLS…SGSATVNLRV (297 aa)). One can recognise an Ig-like domain in the interval 43–131 (DSVELHCEAV…NHLSKSPKVK (89 aa)). 2 disulfides stabilise this stretch: Cys-49–Cys-113 and Cys-162–Cys-211. Positions 143-218 (ERPVITGQYS…YECIYNTNPV (76 aa)) constitute an Ig-like C2-type domain. Asn-163, Asn-222, Asn-280, Asn-286, and Asn-307 each carry an N-linked (GlcNAc...) asparagine glycan. The region spanning 229–323 (PQVVAYKKSE…SGSATVNLRV (95 aa)) is the Ig-like V-type domain. An intrachain disulfide couples Cys-250 to Cys-306. Residues 324–344 (RSRLAALWPFLGIVAEVLVLV) traverse the membrane as a helical segment. Residues 345–388 (TIIFIYEKRRKPDEVLDDDDGGSAPLKSNATNHKDKNVRQRNAN) are Cytoplasmic-facing. Residues 358 to 388 (EVLDDDDGGSAPLKSNATNHKDKNVRQRNAN) form a disordered region.

Interacts with NXNL1, SLC2A1 and SLC16A1. N-glycosylated. Retinal cone photoreceptors (at protein level). In terms of tissue distribution, brain endothelial cells, kidney epithelial cells and erythroblasts (at protein level).

Its subcellular location is the cell membrane. It localises to the photoreceptor inner segment. The protein resides in the cell projection. It is found in the cilium. The protein localises to the photoreceptor outer segment. Its subcellular location is the endoplasmic reticulum membrane. It localises to the basolateral cell membrane. Its function is as follows. Essential for normal retinal maturation and development. Acts as a retinal cell surface receptor for NXNL1 and plays an important role in NXNL1-mediated survival of retinal cone photoreceptors. In association with glucose transporter SLC16A1/GLUT1 and NXNL1, promotes retinal cone survival by enhancing aerobic glycolysis and accelerating the entry of glucose into photoreceptors. In terms of biological role, signaling receptor for cyclophilins, essential for PPIA/CYPA and PPIB/CYPB-dependent signaling related to chemotaxis and adhesion of immune cells. Plays an important role in targeting the monocarboxylate transporters SLC16A1/GLUT1, SLC16A3, SLC16A8, SLC16A11 and SLC16A12 to the plasma membrane. Acts as a coreceptor for vascular endothelial growth factor receptor 2 (KDR/VEGFR2) in endothelial cells enhancing its VEGFA-mediated activation and downstream signaling. Promotes angiogenesis through EPAS1/HIF2A-mediated up-regulation of VEGFA and KDR/VEGFR2 in endothelial cells. The protein is Basigin (BSG) of Gallus gallus (Chicken).